The sequence spans 173 residues: Crossover junction endodeoxyribonuclease RuvC (173 aa).

Active-site residues include aspartate 8, glutamate 67, and aspartate 139. Mg(2+) is bound by residues aspartate 8, glutamate 67, and aspartate 139.

The protein belongs to the RuvC family. As to quaternary structure, homodimer which binds Holliday junction (HJ) DNA. The HJ becomes 2-fold symmetrical on binding to RuvC with unstacked arms; it has a different conformation from HJ DNA in complex with RuvA. In the full resolvosome a probable DNA-RuvA(4)-RuvB(12)-RuvC(2) complex forms which resolves the HJ. The cofactor is Mg(2+).

The protein resides in the cytoplasm. The enzyme catalyses Endonucleolytic cleavage at a junction such as a reciprocal single-stranded crossover between two homologous DNA duplexes (Holliday junction).. Its function is as follows. The RuvA-RuvB-RuvC complex processes Holliday junction (HJ) DNA during genetic recombination and DNA repair. Endonuclease that resolves HJ intermediates. Cleaves cruciform DNA by making single-stranded nicks across the HJ at symmetrical positions within the homologous arms, yielding a 5'-phosphate and a 3'-hydroxyl group; requires a central core of homology in the junction. The consensus cleavage sequence is 5'-(A/T)TT(C/G)-3'. Cleavage occurs on the 3'-side of the TT dinucleotide at the point of strand exchange. HJ branch migration catalyzed by RuvA-RuvB allows RuvC to scan DNA until it finds its consensus sequence, where it cleaves and resolves the cruciform DNA. This is Crossover junction endodeoxyribonuclease RuvC from Photorhabdus laumondii subsp. laumondii (strain DSM 15139 / CIP 105565 / TT01) (Photorhabdus luminescens subsp. laumondii).